A 548-amino-acid polypeptide reads, in one-letter code: Glucose-6-phosphate isomerase 1 (548 aa).

Glu-353 (proton donor) is an active-site residue. Catalysis depends on residues His-384 and Lys-512.

The protein belongs to the GPI family.

The protein localises to the cytoplasm. It catalyses the reaction alpha-D-glucose 6-phosphate = beta-D-fructose 6-phosphate. Its pathway is carbohydrate biosynthesis; gluconeogenesis. It functions in the pathway carbohydrate degradation; glycolysis; D-glyceraldehyde 3-phosphate and glycerone phosphate from D-glucose: step 2/4. In terms of biological role, catalyzes the reversible isomerization of glucose-6-phosphate to fructose-6-phosphate. The protein is Glucose-6-phosphate isomerase 1 of Neisseria meningitidis serogroup A / serotype 4A (strain DSM 15465 / Z2491).